Consider the following 275-residue polypeptide: tRNA pseudouridine synthase A (275 aa).

Aspartate 56 functions as the Nucleophile in the catalytic mechanism. Tyrosine 114 serves as a coordination point for substrate.

The protein belongs to the tRNA pseudouridine synthase TruA family. Homodimer.

The catalysed reaction is uridine(38/39/40) in tRNA = pseudouridine(38/39/40) in tRNA. Formation of pseudouridine at positions 38, 39 and 40 in the anticodon stem and loop of transfer RNAs. This is tRNA pseudouridine synthase A from Polynucleobacter asymbioticus (strain DSM 18221 / CIP 109841 / QLW-P1DMWA-1) (Polynucleobacter necessarius subsp. asymbioticus).